We begin with the raw amino-acid sequence, 758 residues long: 5-methyltetrahydropteroyltriglutamate--homocysteine methyltransferase (758 aa).

5-methyltetrahydropteroyltri-L-glutamate contacts are provided by residues 17–20 (RELK) and Lys-117. L-homocysteine-binding positions include 434 to 436 (IGS) and Glu-487. L-methionine-binding positions include 434–436 (IGS) and Glu-487. 5-methyltetrahydropteroyltri-L-glutamate is bound by residues 518 to 519 (RC) and Trp-564. Asp-602 serves as a coordination point for L-homocysteine. Asp-602 contacts L-methionine. Glu-608 serves as a coordination point for 5-methyltetrahydropteroyltri-L-glutamate. Residues His-644, Cys-646, and Glu-668 each contribute to the Zn(2+) site. The active-site Proton donor is the His-697. A Zn(2+)-binding site is contributed by Cys-729.

It belongs to the vitamin-B12 independent methionine synthase family. The cofactor is Zn(2+).

The catalysed reaction is 5-methyltetrahydropteroyltri-L-glutamate + L-homocysteine = tetrahydropteroyltri-L-glutamate + L-methionine. The protein operates within amino-acid biosynthesis; L-methionine biosynthesis via de novo pathway; L-methionine from L-homocysteine (MetE route): step 1/1. Functionally, catalyzes the transfer of a methyl group from 5-methyltetrahydrofolate to homocysteine resulting in methionine formation. The chain is 5-methyltetrahydropteroyltriglutamate--homocysteine methyltransferase from Yersinia pestis bv. Antiqua (strain Antiqua).